The chain runs to 373 residues: MEDFIYYNGKKYRKGYTTGTCAAAAAKACVEMILTQEEVSAVQVTTTGGTILEIPVAYQKFSKDKATAAVQKDGGDDIDATHGMWIFVDIDLTDNAEVVLDGGVGIGRATQKGISVAVGEAAINPAPRKNILATVRESLGENRGAKILVYAPEGEERAKRTMNSNLGIIGGISILGTTGIVTPMSDEGWKKSLSMELEMKRNQGLDQIILVPGNYGDDFVQNTLGFSSGNIVSMSNFVGYMLKETQRLAFKKVLMVGHFGKLVKVSAGIFTTYSKDADARAEILVANLALLGAPLSLLQAVEKCNTTEAAGELIEEAGFTQVYEVIAQKIKARSERFLKFTKPSVEIDVVTFSTERGLLAATKDIDVLREEWR.

This sequence belongs to the CbiD family.

The enzyme catalyses Co-precorrin-5B + S-adenosyl-L-methionine = Co-precorrin-6A + S-adenosyl-L-homocysteine. Its pathway is cofactor biosynthesis; adenosylcobalamin biosynthesis; cob(II)yrinate a,c-diamide from sirohydrochlorin (anaerobic route): step 6/10. In terms of biological role, catalyzes the methylation of C-1 in cobalt-precorrin-5B to form cobalt-precorrin-6A. The protein is Cobalt-precorrin-5B C(1)-methyltransferase of Listeria monocytogenes serovar 1/2a (strain ATCC BAA-679 / EGD-e).